Consider the following 450-residue polypeptide: ATP-dependent protease ATPase subunit HslU (450 aa).

ATP contacts are provided by residues Val-29, 71 to 76 (GVGKTE), Asp-261, Glu-328, and Arg-400.

This sequence belongs to the ClpX chaperone family. HslU subfamily. As to quaternary structure, a double ring-shaped homohexamer of HslV is capped on each side by a ring-shaped HslU homohexamer. The assembly of the HslU/HslV complex is dependent on binding of ATP.

Its subcellular location is the cytoplasm. Its function is as follows. ATPase subunit of a proteasome-like degradation complex; this subunit has chaperone activity. The binding of ATP and its subsequent hydrolysis by HslU are essential for unfolding of protein substrates subsequently hydrolyzed by HslV. HslU recognizes the N-terminal part of its protein substrates and unfolds these before they are guided to HslV for hydrolysis. The protein is ATP-dependent protease ATPase subunit HslU of Rickettsia africae (strain ESF-5).